A 251-amino-acid chain; its full sequence is Triosephosphate isomerase (251 aa).

9–11 contributes to the substrate binding site; that stretch reads NWK. Histidine 95 serves as the catalytic Electrophile. Glutamate 167 acts as the Proton acceptor in catalysis. Substrate-binding positions include glycine 173, serine 212, and 233–234; that span reads GG.

This sequence belongs to the triosephosphate isomerase family. In terms of assembly, homodimer.

Its subcellular location is the cytoplasm. It carries out the reaction D-glyceraldehyde 3-phosphate = dihydroxyacetone phosphate. The protein operates within carbohydrate biosynthesis; gluconeogenesis. Its pathway is carbohydrate degradation; glycolysis; D-glyceraldehyde 3-phosphate from glycerone phosphate: step 1/1. In terms of biological role, involved in the gluconeogenesis. Catalyzes stereospecifically the conversion of dihydroxyacetone phosphate (DHAP) to D-glyceraldehyde-3-phosphate (G3P). The protein is Triosephosphate isomerase of Pseudomonas aeruginosa (strain LESB58).